The following is a 145-amino-acid chain: Methylglyoxal synthase (145 aa).

The 145-residue stretch at 1 to 145 (MNSKKKIALV…YYQKIRKDNF (145 aa)) folds into the MGS-like domain. Substrate is bound by residues His-12, Lys-16, 38-41 (TGTT), and 58-59 (SG). Asp-64 serves as the catalytic Proton donor/acceptor. Residue His-91 participates in substrate binding.

It belongs to the methylglyoxal synthase family.

The catalysed reaction is dihydroxyacetone phosphate = methylglyoxal + phosphate. Catalyzes the formation of methylglyoxal from dihydroxyacetone phosphate. This Clostridium acetobutylicum (strain ATCC 824 / DSM 792 / JCM 1419 / IAM 19013 / LMG 5710 / NBRC 13948 / NRRL B-527 / VKM B-1787 / 2291 / W) protein is Methylglyoxal synthase.